The chain runs to 294 residues: Protein C3orf33 (294 aa).

Alanine 2 carries the post-translational modification N-acetylalanine. Residues isoleucine 40–isoleucine 56 traverse the membrane as a helical segment.

In terms of tissue distribution, highly expressed in ileocecal tissue and endometrium.

The protein resides in the membrane. It localises to the secreted. Secreted protein may play a role in transcription regulation via the MAPK3/MAPK1 pathway through an unidentified receptor on the plasma membrane. The sequence is that of Protein C3orf33 (C3orf33) from Homo sapiens (Human).